Here is a 189-residue protein sequence, read N- to C-terminus: Cold-regulated 413 plasma membrane protein 3 (189 aa).

The Extracellular segment spans residues Met-1–Pro-24. Residues Val-25–Leu-45 traverse the membrane as a helical segment. Residues Asp-46–Asn-55 lie on the Cytoplasmic side of the membrane. Residues Ile-56–Val-76 traverse the membrane as a helical segment. Residues Leu-77–Asn-79 are Extracellular-facing. A helical transmembrane segment spans residues Gly-80–Phe-100. Residues His-101–Leu-104 lie on the Cytoplasmic side of the membrane. The helical transmembrane segment at Glu-105–Phe-125 threads the bilayer. Residues Arg-126–Ser-168 lie on the Extracellular side of the membrane. Residues Ile-169 to Leu-189 traverse the membrane as a helical segment.

It belongs to the Cold-regulated 413 protein family.

It is found in the cell membrane. This is Cold-regulated 413 plasma membrane protein 3 from Arabidopsis thaliana (Mouse-ear cress).